A 557-amino-acid polypeptide reads, in one-letter code: High-affinity hexose transporter ght4 (557 aa).

The Cytoplasmic portion of the chain corresponds to 1-9 (MGRTLTSVL). Residues 10 to 30 (VVFISMAGWLGGADTGSISGI) form a helical membrane-spanning segment. Residues 31-58 (LGMRDFQSRFADRYNPITNSYSYSAWRQ) lie on the Extracellular side of the membrane. Residues 59–79 (ALLTGTVNAGCLFGAMLSSPF) traverse the membrane as a helical segment. The Cytoplasmic portion of the chain corresponds to 80-87 (TEAIGKKY). A helical transmembrane segment spans residues 88–108 (SIAFFSGCYIIGQILLVTAVP). Over 109-112 (SWVQ) the chain is Extracellular. The chain crosses the membrane as a helical span at residues 113–133 (IMVGKLFTGLTIGALSVLSPG). Over 134–144 (YQSEVAPPQIR) the chain is Cytoplasmic. Residues 145 to 165 (GAVVSTYQLFQTCGTLIAACI) form a helical membrane-spanning segment. Residues 166 to 179 (NMGTHKLRKTASWR) are Extracellular-facing. Residues 180 to 200 (TSFGINILWGIFLMVGVLFLP) traverse the membrane as a helical segment. The Cytoplasmic segment spans residues 201–266 (ESPRYLIYKG…VFGKEVRYRT (66 aa)). Residues 267–285 (VLGFLTMLLRELIGNNYYF) form a helical membrane-spanning segment. Over 286-301 (YYATQVFKGTGMTDIF) the chain is Extracellular. The chain crosses the membrane as a helical span at residues 302-322 (LPAVILGAINFGTTFGALYTI). At 323–328 (DNLGRR) the chain is on the cytoplasmic side. Residues 329 to 349 (NPLIFGAAFQSICFFIYAAVG) form a helical membrane-spanning segment. Over 350–363 (DRKLIYKNGTSDHR) the chain is Extracellular. Asn-357 is a glycosylation site (N-linked (GlcNAc...) asparagine). The helical transmembrane segment at 364 to 384 (AGAVMIVFSCLFLFSYCCSWG) threads the bilayer. Over 385-404 (PMGWVIVGETFPIRYRSKCA) the chain is Cytoplasmic. The helical transmembrane segment at 405 to 425 (AVATSGNWLGNFMVSFFTPFI) threads the bilayer. At 426-432 (SNSIGFK) the chain is on the extracellular side. A helical transmembrane segment spans residues 433–453 (LGYIYACINMTSAFQIFLMAK). Topologically, residues 454–557 (ETKGLTLEEV…VSEESHPTWV (104 aa)) are cytoplasmic. Residues 492–514 (KEEEKREREKSKGYRGQEERFIE) show a composition bias toward basic and acidic residues. The tract at residues 492–557 (KEEEKREREK…VSEESHPTWV (66 aa)) is disordered. Residues 524-536 (SSASSESFASAGA) are compositionally biased toward low complexity. A compositionally biased stretch (basic and acidic residues) spans 547–557 (NVSEESHPTWV).

Belongs to the major facilitator superfamily. Sugar transporter (TC 2.A.1.1) family.

Its subcellular location is the membrane. This is High-affinity hexose transporter ght4 (ght4) from Schizosaccharomyces pombe (strain 972 / ATCC 24843) (Fission yeast).